A 501-amino-acid polypeptide reads, in one-letter code: Phenylalanine--tRNA ligase alpha subunit (501 aa).

L-phenylalanine is bound by residues threonine 344, 383–385, and phenylalanine 424; that span reads QID. Position 426 (glutamate 426) interacts with Mg(2+). Phenylalanine 449 provides a ligand contact to L-phenylalanine.

The protein belongs to the class-II aminoacyl-tRNA synthetase family. Phe-tRNA synthetase alpha subunit type 2 subfamily. Tetramer of two alpha and two beta subunits. Mg(2+) is required as a cofactor.

It is found in the cytoplasm. The enzyme catalyses tRNA(Phe) + L-phenylalanine + ATP = L-phenylalanyl-tRNA(Phe) + AMP + diphosphate + H(+). The protein is Phenylalanine--tRNA ligase alpha subunit of Thermococcus kodakarensis (strain ATCC BAA-918 / JCM 12380 / KOD1) (Pyrococcus kodakaraensis (strain KOD1)).